The following is a 231-amino-acid chain: Flagellar L-ring protein (231 aa).

The N-terminal stretch at 1 to 18 is a signal peptide; sequence MNRLLSVFALGGAVLLAG. Residue C19 is the site of N-palmitoyl cysteine attachment. Residue C19 is the site of S-diacylglycerol cysteine attachment.

It belongs to the FlgH family. In terms of assembly, the basal body constitutes a major portion of the flagellar organelle and consists of four rings (L,P,S, and M) mounted on a central rod.

It localises to the cell outer membrane. The protein resides in the bacterial flagellum basal body. Assembles around the rod to form the L-ring and probably protects the motor/basal body from shearing forces during rotation. The chain is Flagellar L-ring protein from Pseudomonas putida (strain GB-1).